The primary structure comprises 307 residues: uncharacterized protein (307 aa).

The region spanning 5–233 (VQTNGLTKTY…NTEYIELVTP (229 aa)) is the ABC transporter domain. An ATP-binding site is contributed by 37–44 (GPNGAGKT).

It belongs to the ABC transporter superfamily.

This is an uncharacterized protein from Bacillus subtilis (strain 168).